The sequence spans 450 residues: MGETMSKRLKLHLGGEAEMEERAFVNPFPDYEAAAGALLASGAAEETGCVRPPATTDEPGLPFHQDGKIIHNFIRRIQTKIKDLLQQMEEGLKTADPHDCSAYTGWTGIALLYLQLYRVTCDQTYLLRSLDYVKRTLRNLNGRRVTFLCGDAGPLAVGAVIYHKLRSDCESQECVTKLLQLQRSVVCQESDLPDELLYGRAGYLYALLYLNTEIGPGTVCESAIKEVVNAIIESGKTLSREERKTERCPLLYQWHRKQYVGAAHGMAGIYYMLMQPAAKVDQETLTEMVKPSIDYVRHKKFRSGNYPSSLSNETDRLVHWCHGAPGVIHMLMQAYKVFKEEKYLKEAMECSDVIWQRGLLRKGYGICHGTAGNGYSFLSLYRLTQDKKYLYRACKFAEWCLDYGAHGCRIPDRPYSLFEGMAGAIHFLSDVLGPETSRFPAFELDSSKRD.

Glycine 2 carries N-myristoyl glycine lipidation. Residues 2–15 form an interaction with inositol phospholipids region; sequence GETMSKRLKLHLGG. Tyrosine 198 bears the Phosphotyrosine mark.

The protein belongs to the LanC-like protein family. In terms of assembly, interacts with an array of inositol phospholipids such as phosphatidylinositol 3-phosphate (PI3P), phosphatidylinositol 4-phosphate (PI4P) and phosphatidylinositol 5-phosphate (PI5P). PIP-binding enhances membrane association. Post-translationally, myristoylated. Essential for membrane association. Expressed in brain and testis.

The protein resides in the nucleus. It localises to the cytoplasm. The protein localises to the cell membrane. Its function is as follows. Necessary for abscisic acid (ABA) binding on the cell membrane and activation of the ABA signaling pathway in granulocytes. This Homo sapiens (Human) protein is LanC-like protein 2 (LANCL2).